The primary structure comprises 276 residues: Phosphatidylcholine synthase (276 aa).

Residues 1–30 are Cytoplasmic-facing; the sequence is MGGQKEMADSVKTKLTGKLKAKKVTAPQAK. A helical transmembrane segment spans residues 31-51; sequence AFSVHLLTASGSFLAFLSVVA. Residues 52 to 57 are Periplasmic-facing; that stretch reads ASDGRY. The chain crosses the membrane as a helical span at residues 58-78; the sequence is TAMWWWLGLALFVDGIDGPIA. Residues 79-91 are Cytoplasmic-facing; it reads RKLEVKYVLPNWS. Residues 92 to 112 traverse the membrane as a helical segment; it reads GELLDSIIDYVTYVLIPAFAL. Over 113–115 the chain is Periplasmic; it reads YQS. The chain crosses the membrane as a helical span at residues 116–136; that stretch reads GFMGTNLSFISGAIIVVSSAI. Topologically, residues 137–146 are cytoplasmic; that stretch reads YYADTGMKTK. The helical transmembrane segment at 147 to 167 threads the bilayer; that stretch reads ENFFKGFPVVWNMVVFTLFIV. At 168–171 the chain is on the periplasmic side; it reads RPGE. A helical transmembrane segment spans residues 172–192; the sequence is WVAFGTVVASAILSFLPINFL. The Cytoplasmic segment spans residues 193–202; it reads HPVRVVRLRP. The helical transmembrane segment at 203–223 threads the bilayer; sequence LNLTIFLLWCAFGVIALYYML. Topologically, residues 224 to 230 are periplasmic; sequence DAPLWVR. The helical transmembrane segment at 231–251 threads the bilayer; sequence IGISVTGLYIYFIGAIMQLFP. Topologically, residues 252 to 276 are cytoplasmic; that stretch reads SLGREAALAKARKLVEKQQKSGEAP.

This sequence belongs to the CDP-alcohol phosphatidyltransferase class-I family. Mn(2+) serves as cofactor.

It localises to the cell inner membrane. The enzyme catalyses a CDP-1,2-diacyl-sn-glycerol + choline = a 1,2-diacyl-sn-glycero-3-phosphocholine + CMP + H(+). Its function is as follows. Condenses choline with CDP-diglyceride to produce phosphatidylcholine and CMP. The polypeptide is Phosphatidylcholine synthase (Brucella melitensis biotype 1 (strain ATCC 23456 / CCUG 17765 / NCTC 10094 / 16M)).